The primary structure comprises 347 residues: D-alanine--D-alanine ligase (347 aa).

The 203-residue stretch at 131–333 (KRVLESAGIA…YPELIERLVD (203 aa)) folds into the ATP-grasp domain. 161-216 (EEKLAYPVFTKPSNMGSSVGISKSENQEELRQALELAFRYDSRVLVEQGVNAREIE) provides a ligand contact to ATP. Positions 287, 300, and 302 each coordinate Mg(2+).

Belongs to the D-alanine--D-alanine ligase family. It depends on Mg(2+) as a cofactor. Requires Mn(2+) as cofactor.

Its subcellular location is the cytoplasm. It catalyses the reaction 2 D-alanine + ATP = D-alanyl-D-alanine + ADP + phosphate + H(+). The protein operates within cell wall biogenesis; peptidoglycan biosynthesis. Functionally, cell wall formation. The sequence is that of D-alanine--D-alanine ligase from Streptococcus pneumoniae (strain CGSP14).